We begin with the raw amino-acid sequence, 79 residues long: Small ribosomal subunit protein bS16 (79 aa).

It belongs to the bacterial ribosomal protein bS16 family.

This chain is Small ribosomal subunit protein bS16, found in Marinobacter nauticus (strain ATCC 700491 / DSM 11845 / VT8) (Marinobacter aquaeolei).